Here is a 277-residue protein sequence, read N- to C-terminus: Outer plastidial membrane protein porin (277 aa).

Belongs to the eukaryotic mitochondrial porin (TC 1.B.8.1) family.

Its subcellular location is the plastid outer membrane. Its function is as follows. Forms a channel through the cell membrane that allows diffusion of small hydrophilic molecules. The channel adopts an open conformation at low or zero membrane potential and a closed conformation at potentials above 30-40 mV. The open state has a weak anion selectivity whereas the closed state is cation-selective. This is Outer plastidial membrane protein porin (POR1) from Zea mays (Maize).